The chain runs to 466 residues: Alpha-1A adrenergic receptor (466 aa).

At 1–27 (MVLLSENASEGSNCTHPPAQVNISKAI) the chain is on the extracellular side. Asn-7, Asn-13, and Asn-22 each carry an N-linked (GlcNAc...) asparagine glycan. A helical membrane pass occupies residues 28–51 (LLGVILGGLIIFGVLGNILVILSV). At 52 to 64 (ACHRHLHSVTHYY) the chain is on the cytoplasmic side. The helical transmembrane segment at 65–88 (IVNLAVADLLLTSTVLPFSAIFEI) threads the bilayer. At 89-99 (LGYWAFGRVFC) the chain is on the extracellular side. Residues Cys-99 and Cys-176 are joined by a disulfide bond. The chain crosses the membrane as a helical span at residues 100–122 (NIWAAVDVLCCTASIMGLCIISI). Residues 123–143 (DRYIGVSYPLRYPTIVTQRRG) are Cytoplasmic-facing. The chain crosses the membrane as a helical span at residues 144-167 (VRALLCVWALSLVISIGPLFGWRQ). Over 168–181 (QAPEDETICQINEE) the chain is Extracellular. The helical transmembrane segment at 182-205 (PGYVLFSALGSFYVPLTIILVMYC) threads the bilayer. Residues 206–273 (RVYVVAKRES…FSREKKAAKT (68 aa)) are Cytoplasmic-facing. Residue Ser-215 is modified to Phosphoserine; by PKA. The helical transmembrane segment at 274-297 (LGIVVGCFVLCWLPFFLVMPIGSF) threads the bilayer. The Extracellular segment spans residues 298 to 305 (FPNFKPPE). A helical transmembrane segment spans residues 306–329 (TVFKIVFWLGYLNSCINPIIYPCS). Residues 330–466 (SQEFKKAFQN…ISLGENGEEV (137 aa)) are Cytoplasmic-facing. A Nuclear localization signal motif is present at residues 334–349 (KKAFQNVLRIQCLRRR). A lipid anchor (S-palmitoyl cysteine) is attached at Cys-345.

This sequence belongs to the G-protein coupled receptor 1 family. Adrenergic receptor subfamily. ADRA1A sub-subfamily. Homo- and heterooligomer. Heterooligomerizes with ADRA1B homooligomers in cardiac myocytes. Interacts with CAVIN4.

The protein resides in the nucleus membrane. The protein localises to the cell membrane. It localises to the cytoplasm. Its subcellular location is the membrane. It is found in the caveola. In terms of biological role, this alpha-adrenergic receptor mediates its action by association with G proteins that activate a phosphatidylinositol-calcium second messenger system. Its effect is mediated by G(q) and G(11) proteins. Nuclear ADRA1A-ADRA1B heterooligomers regulate phenylephrine (PE)-stimulated ERK signaling in cardiac myocytes. The polypeptide is Alpha-1A adrenergic receptor (Adra1a) (Mus musculus (Mouse)).